The chain runs to 433 residues: Glycerol-3-phosphate dehydrogenase [NAD(+)] (433 aa).

NAD(+) contacts are provided by residues 17-22, F49, and F117; that span reads GSGNWG. K140 lines the substrate pocket. A173 serves as a coordination point for NAD(+). The disordered stretch occupies residues 187-246; sequence IAYDPPPIDSSRAATPRDRSPNYDSTSANKLPDLTVTSADSNGKDDRGRRTKAKLTPVPE. Residues 208–227 show a composition bias toward polar residues; it reads NYDSTSANKLPDLTVTSADS. The active-site Proton acceptor is the K283. NAD(+) is bound by residues R349 and Q378. 349-350 lines the substrate pocket; that stretch reads RN.

The protein belongs to the NAD-dependent glycerol-3-phosphate dehydrogenase family.

It catalyses the reaction sn-glycerol 3-phosphate + NAD(+) = dihydroxyacetone phosphate + NADH + H(+). The sequence is that of Glycerol-3-phosphate dehydrogenase [NAD(+)] from Pyricularia oryzae (strain Y34) (Rice blast fungus).